Consider the following 964-residue polypeptide: Protein translocase subunit SecA (964 aa).

ATP-binding positions include Gln86, 104-108 (GEGKT), and Asp494. The tract at residues 846 to 964 (ETAESADTIA…YKMCHGQNEA (119 aa)) is disordered. Residues 871–882 (AEGEVEEEDEDT) show a composition bias toward acidic residues. Residues 887-900 (AIAESAAASEAGES) are compositionally biased toward low complexity. Positions 947, 949, 958, and 959 each coordinate Zn(2+).

This sequence belongs to the SecA family. As to quaternary structure, monomer and homodimer. Part of the essential Sec protein translocation apparatus which comprises SecA, SecYEG and auxiliary proteins SecDF. Other proteins may also be involved. It depends on Zn(2+) as a cofactor.

It localises to the cell membrane. Its subcellular location is the cytoplasm. The catalysed reaction is ATP + H2O + cellular proteinSide 1 = ADP + phosphate + cellular proteinSide 2.. Part of the Sec protein translocase complex. Interacts with the SecYEG preprotein conducting channel. Has a central role in coupling the hydrolysis of ATP to the transfer of proteins into and across the cell membrane, serving as an ATP-driven molecular motor driving the stepwise translocation of polypeptide chains across the membrane. The polypeptide is Protein translocase subunit SecA (Bifidobacterium longum subsp. infantis (strain ATCC 15697 / DSM 20088 / JCM 1222 / NCTC 11817 / S12)).